Here is a 233-residue protein sequence, read N- to C-terminus: MSKDIPTPYMWSYQPQMGLAAGASQDYSSRMNWLSAGPHMIGRVNGIRATRNQILLEQAALTSTPRRQLNPPSWPAAQVYQENPAPTTVLLPRDAEAEVQMTNSGAQLAGGARHVRFRDRPSPYSSGSIKRLIIRGRGIQLNDEVVSSSTGPRPDGVFQLGGAGRSSFTPRQAYLTLQSSSSQPRSGGIGTLQFVEEFVPSVYFNPFSGAPGLYPDDFIPNYDAVSESVDGYD.

Phosphothreonine; by host is present on T64. A propeptide spanning residues 112–163 (ARHVRFRDRPSPYSSGSIKRLIIRGRGIQLNDEVVSSSTGPRPDGVFQLGGA) is cleaved from the precursor. S180 carries the post-translational modification Phosphoserine; by host.

Belongs to the adenoviridae hexon-linking protein family. Interacts with the peripentonal hexons as well as the hexons in the facets. Part of a complex composed of the core-capsid bridging protein, the endosome lysis protein VI and the hexon-linking protein VIII; these interactions bridge the virus core to the capsid. In terms of processing, cleaved by the viral protease during virion maturation. May cause the middle segment to be shed from the capsid.

Its subcellular location is the virion. It is found in the host nucleus. Structural component of the virion that acts as a cement protein on the capsid interior and which glue the peripentonal hexons and group-of-nine hexons together. This chain is Pre-hexon-linking protein VIII, found in Homo sapiens (Human).